We begin with the raw amino-acid sequence, 253 residues long: Discoidin-1 subunit A (253 aa).

Serine 2 carries the N-acetylserine modification. Residues 2 to 152 (STQGLVQLLA…ISLRCEFYTQ (151 aa)) enclose the F5/8 type C domain. A Cell attachment site motif is present at residues 79 to 81 (RGD).

Tetramer of four different chains (A to D). Stalk cells.

Its subcellular location is the cytoplasm. Its function is as follows. Galactose- and N-acetylgalactosamine-binding lectin. May play a role in cell-substratum adhesion rather than in cell-cell adhesion. May be necessary for the maintenance of normal elongate morphology during aggregation. In Dictyostelium discoideum (Social amoeba), this protein is Discoidin-1 subunit A (dscA-1).